Reading from the N-terminus, the 505-residue chain is Sucrose porin (505 aa).

Residues 1–22 (MYKKRKLAILIALLTGTAAAHG) form the signal peptide. The disordered stretch occupies residues 44-94 (ETRASTAESRAASAEQKVQQLTQQQQQTQATTQQVARRTTQLEEKAERPGG). The segment covering 46 to 82 (RASTAESRAASAEQKVQQLTQQQQQTQATTQQVARRT) has biased composition (low complexity). Over residues 83 to 93 (TQLEEKAERPG) the composition is skewed to basic and acidic residues.

This sequence belongs to the porin LamB (TC 1.B.3) family. In terms of assembly, homotrimer.

It is found in the cell outer membrane. In terms of biological role, porin for sucrose uptake. This is Sucrose porin (scrY) from Klebsiella pneumoniae.